The following is a 430-amino-acid chain: Aspartate--tRNA(Asp/Asn) ligase (430 aa).

E166 is a binding site for L-aspartate. The interval 188-191 (QLYK) is aspartate. L-aspartate is bound at residue R210. ATP is bound by residues 210 to 212 (RAE), 218 to 220 (KHL), and E353. Residues E353 and S356 each coordinate Mg(2+). S356 and R360 together coordinate L-aspartate. Position 401 to 404 (401 to 404 (GAER)) interacts with ATP.

The protein belongs to the class-II aminoacyl-tRNA synthetase family. Type 2 subfamily. As to quaternary structure, homodimer. Mg(2+) serves as cofactor.

The protein resides in the cytoplasm. It carries out the reaction tRNA(Asx) + L-aspartate + ATP = L-aspartyl-tRNA(Asx) + AMP + diphosphate. In terms of biological role, aspartyl-tRNA synthetase with relaxed tRNA specificity since it is able to aspartylate not only its cognate tRNA(Asp) but also tRNA(Asn). Reaction proceeds in two steps: L-aspartate is first activated by ATP to form Asp-AMP and then transferred to the acceptor end of tRNA(Asp/Asn). This chain is Aspartate--tRNA(Asp/Asn) ligase, found in Methanospirillum hungatei JF-1 (strain ATCC 27890 / DSM 864 / NBRC 100397 / JF-1).